Here is a 444-residue protein sequence, read N- to C-terminus: Glucoside xylosyltransferase 2 (444 aa).

Residues 1-4 (MKLR) lie on the Cytoplasmic side of the membrane. Residues 5–25 (SKAAALLLLALAVLLLALLSL) form a helical; Signal-anchor for type II membrane protein membrane-spanning segment. At 26-444 (RARRDPEPPG…IIHMGPNPMS (419 aa)) the chain is on the lumenal side. A disordered region spans residues 31 to 101 (PEPPGFPARP…LARRPGETRS (71 aa)). Over residues 68–83 (RSPRRQPPRLRPRAGR) the composition is skewed to basic residues. Positions 87–101 (ASREKLARRPGETRS) are enriched in basic and acidic residues. N-linked (GlcNAc...) asparagine glycosylation is present at asparagine 275.

The protein belongs to the glycosyltransferase 8 family.

The protein localises to the membrane. The catalysed reaction is 3-O-(beta-D-glucosyl)-L-seryl-[EGF-like domain protein] + UDP-alpha-D-xylose = 3-O-[alpha-D-xylosyl-(1-&gt;3)-beta-D-glucosyl]-L-seryl-[EGF-like domain protein] + UDP + H(+). Its function is as follows. Glycosyltransferase which elongates the O-linked glucose attached to EGF-like repeats in the extracellular domain of Notch proteins by catalyzing the addition of xylose. This Mus musculus (Mouse) protein is Glucoside xylosyltransferase 2 (Gxylt2).